Here is a 695-residue protein sequence, read N- to C-terminus: DNA ligase (695 aa).

Residues 36–40 (DADYD), 85–86 (SL), and Glu123 each bind NAD(+). Lys125 (N6-AMP-lysine intermediate) is an active-site residue. Residues Arg146, Glu182, Lys318, and Lys342 each contribute to the NAD(+) site. The Zn(2+) site is built by Cys436, Cys439, Cys454, and Cys460. Positions 617 to 695 (LQSGDLAGKT…EDGLKALLSQ (79 aa)) constitute a BRCT domain.

The protein belongs to the NAD-dependent DNA ligase family. LigA subfamily. Mg(2+) serves as cofactor. The cofactor is Mn(2+).

The catalysed reaction is NAD(+) + (deoxyribonucleotide)n-3'-hydroxyl + 5'-phospho-(deoxyribonucleotide)m = (deoxyribonucleotide)n+m + AMP + beta-nicotinamide D-nucleotide.. Its function is as follows. DNA ligase that catalyzes the formation of phosphodiester linkages between 5'-phosphoryl and 3'-hydroxyl groups in double-stranded DNA using NAD as a coenzyme and as the energy source for the reaction. It is essential for DNA replication and repair of damaged DNA. This chain is DNA ligase, found in Bordetella avium (strain 197N).